We begin with the raw amino-acid sequence, 378 residues long: Cytochrome b (378 aa).

The next 4 helical transmembrane spans lie at 34-54 (FGSLLGLCLMLQILTGLFLAM), 78-99 (WFLRICHANGASFFFACLFMHV), 114-134 (WNTGVIILFLTMATGFLGYVL), and 179-199 (FFTFHFIFPFIILALMMIHLL). His-84 and His-98 together coordinate heme b. 2 residues coordinate heme b: His-183 and His-197. A ubiquinone is bound at residue His-202. Transmembrane regions (helical) follow at residues 227 to 247 (YKDIFGFIVFYWILIRFIWKF), 289 to 309 (LGGVIALVLSIAILLILPFTH), 321 to 341 (LNQILFWNMVVVASLLTWIGA), and 348 to 368 (YVLTGQILTVLYFSYFIINPL).

This sequence belongs to the cytochrome b family. As to quaternary structure, the main subunits of complex b-c1 are: cytochrome b, cytochrome c1 and the Rieske protein. Requires heme b as cofactor.

It localises to the mitochondrion inner membrane. In terms of biological role, component of the ubiquinol-cytochrome c reductase complex (complex III or cytochrome b-c1 complex) that is part of the mitochondrial respiratory chain. The b-c1 complex mediates electron transfer from ubiquinol to cytochrome c. Contributes to the generation of a proton gradient across the mitochondrial membrane that is then used for ATP synthesis. This chain is Cytochrome b (MT-CYB), found in Anopheles quadrimaculatus (Common malaria mosquito).